Consider the following 485-residue polypeptide: Glutamyl-tRNA(Gln) amidotransferase subunit A (485 aa).

Residues lysine 78 and serine 153 each act as charge relay system in the active site. Serine 177 (acyl-ester intermediate) is an active-site residue.

Belongs to the amidase family. GatA subfamily. In terms of assembly, heterotrimer of A, B and C subunits.

The catalysed reaction is L-glutamyl-tRNA(Gln) + L-glutamine + ATP + H2O = L-glutaminyl-tRNA(Gln) + L-glutamate + ADP + phosphate + H(+). Allows the formation of correctly charged Gln-tRNA(Gln) through the transamidation of misacylated Glu-tRNA(Gln) in organisms which lack glutaminyl-tRNA synthetase. The reaction takes place in the presence of glutamine and ATP through an activated gamma-phospho-Glu-tRNA(Gln). The sequence is that of Glutamyl-tRNA(Gln) amidotransferase subunit A from Trichlorobacter lovleyi (strain ATCC BAA-1151 / DSM 17278 / SZ) (Geobacter lovleyi).